A 334-amino-acid chain; its full sequence is MTPIDAKRPLQLNDQGQLRHFLSLDGLPRELLTEILDTADSFLEVGARAVKKVPLLRGKTVCNVFFENSTRTRTTFELAAQRLSADVISLNVSTSSTSKGETLFDTLRNLEAMAADMFVVRHSDSGAAHFIAEHVCPDVAVINGGDGRHAHPTQGMLDMLTIRRHKGSFENLSVAIVGDILHSRVARSDMLALKALGCPDIRVIGPKTLIPIGIEQYGVKVYTDLAEGLKDVDVVIMLRLQRERMAGGLLPSEGEFYRLFGLTTARLACAKPDAIVMHPGPINRGVEIESAVADGKHSVILNQVTYGIAVRMAVLSMAMSGQNAQRQFDQENAQ.

Carbamoyl phosphate contacts are provided by Arg-71 and Thr-72. L-aspartate is bound at residue Lys-99. The carbamoyl phosphate site is built by Arg-121, His-151, and Gln-154. Positions 184 and 239 each coordinate L-aspartate. Residues Gly-280 and Pro-281 each coordinate carbamoyl phosphate.

It belongs to the aspartate/ornithine carbamoyltransferase superfamily. ATCase family. In terms of assembly, heterododecamer (2C3:3R2) of six catalytic PyrB chains organized as two trimers (C3), and six regulatory PyrI chains organized as three dimers (R2).

The enzyme catalyses carbamoyl phosphate + L-aspartate = N-carbamoyl-L-aspartate + phosphate + H(+). It functions in the pathway pyrimidine metabolism; UMP biosynthesis via de novo pathway; (S)-dihydroorotate from bicarbonate: step 2/3. Catalyzes the condensation of carbamoyl phosphate and aspartate to form carbamoyl aspartate and inorganic phosphate, the committed step in the de novo pyrimidine nucleotide biosynthesis pathway. The polypeptide is Aspartate carbamoyltransferase catalytic subunit (Pseudomonas putida (Arthrobacter siderocapsulatus)).